Reading from the N-terminus, the 168-residue chain is RxLR effector protein PITG_12737 (168 aa).

Positions 1–20 (MRACAILVVAAAAVLTGSTA) are cleaved as a signal peptide. The RxLR-dEER motif lies at 54-77 (RRLRKHKTVNTNSEMEYESEAEAR).

Belongs to the RxLR effector family.

It localises to the secreted. Its subcellular location is the host nucleus. The protein resides in the host cytoplasm. Functionally, effector that enhances P.infestans colonization of Nicotiana benthamiana leaves. This chain is RxLR effector protein PITG_12737, found in Phytophthora infestans (strain T30-4) (Potato late blight agent).